Reading from the N-terminus, the 352-residue chain is Glucose 1-dehydrogenase 1 (352 aa).

Cysteine 35 is a binding site for Zn(2+). Threonine 37 contributes to the substrate binding site. Residues histidine 60 and glutamate 61 each coordinate Zn(2+). Position 83 (asparagine 83) interacts with substrate. 4 residues coordinate Zn(2+): cysteine 87, cysteine 90, cysteine 93, and cysteine 101. Glutamate 108, glutamine 144, and aspartate 148 together coordinate substrate. Glutamine 144 is a binding site for Zn(2+). NADP(+)-binding positions include 182–185 (TGTI), 204–206 (NKR), 264–266 (FGF), 292–294 (LIN), and lysine 341. Asparagine 294 lines the substrate pocket.

Belongs to the zinc-containing alcohol dehydrogenase family. Glucose 1-dehydrogenase subfamily. Requires Zn(2+) as cofactor.

The catalysed reaction is D-glucose + NAD(+) = D-glucono-1,5-lactone + NADH + H(+). It carries out the reaction D-glucose + NADP(+) = D-glucono-1,5-lactone + NADPH + H(+). In terms of biological role, catalyzes the NAD(P)(+)-dependent oxidation of D-glucose to D-gluconate via gluconolactone. Can utilize both NAD(+) and NADP(+) as electron acceptor. Is involved in the degradation of glucose through a non-phosphorylative variant of the Entner-Doudoroff pathway. This chain is Glucose 1-dehydrogenase 1, found in Picrophilus torridus (strain ATCC 700027 / DSM 9790 / JCM 10055 / NBRC 100828 / KAW 2/3).